Reading from the N-terminus, the 73-residue chain is Conotoxin MaI51 (73 aa).

The signal sequence occupies residues 1 to 19 (MQKLTILLLVAAVLLSTQA). A propeptide spanning residues 20–41 (LNQEKRPKEMINVLSKGKTNAE) is cleaved from the precursor. The residue at position 46 (Gln-46) is a Pyrrolidone carboxylic acid. 3 cysteine pairs are disulfide-bonded: Cys-47-Cys-61, Cys-54-Cys-65, and Cys-60-Cys-69. Ile-72 is modified (isoleucine amide).

It belongs to the conotoxin O2 superfamily. As to expression, expressed by the venom duct.

The protein localises to the secreted. The protein is Conotoxin MaI51 of Conus marmoreus (Marble cone).